Reading from the N-terminus, the 356-residue chain is GDSL esterase/lipase At5g37690 (356 aa).

Positions 1–18 are cleaved as a signal peptide; sequence MMILRLALAIVISTYATA. Ser-34 (nucleophile) is an active-site residue. Asn-116 and Asn-291 each carry an N-linked (GlcNAc...) asparagine glycan. Active-site residues include Asp-322 and His-325.

Belongs to the 'GDSL' lipolytic enzyme family.

Its subcellular location is the secreted. This is GDSL esterase/lipase At5g37690 from Arabidopsis thaliana (Mouse-ear cress).